The following is a 667-amino-acid chain: Probable Na(+)/H(+) antiporter nhx-9 (667 aa).

The next 8 membrane-spanning stretches (helical) occupy residues 41–61 (VYVITVWLLIASLAKILFNLM), 73–93 (LLIIVGLALGWILHQTSLSGA), 97–117 (SHTFFLYLLPPIIFDAGYFMP), 128–148 (VLVFSVFGTIWNTFAIGGSLL), 165–185 (ILVFSALISAVDPVAVIAVFE), 192–212 (FLFINVFGEALFNDGVTVVLY), 236–256 (LSFFVVALGGAAVGIIFAIAA), and 268–288 (ILAPVFIFVLPYMAYLTAEMV). Asn310 is a glycosylation site (N-linked (GlcNAc...) asparagine). 4 consecutive transmembrane segments (helical) span residues 325 to 345 (MLAQSSETVIFMFLGLSTISS), 351 to 371 (LYFICATLFFCLIYRAIGIVV), 390 to 410 (FIMSYGGLRGAIAYGLVVSIP), and 418 to 438 (MFITATIAVIYFTVFLQGITI). A disordered region spans residues 637 to 667 (TEQLPSETPFHSGRRQSTGDLNATRRADFNV). A Phosphothreonine modification is found at Thr644.

The protein belongs to the monovalent cation:proton antiporter 1 (CPA1) transporter (TC 2.A.36) family. Phosphorylated. As to expression, in early stage larva, expressed in the twin excretory cell processes. At later larval stages, expression is more restricted, resulting in a 'beads on a chain' appearance.

Its subcellular location is the cell membrane. Serves some physiological function other than regulation of cellular pH. The sequence is that of Probable Na(+)/H(+) antiporter nhx-9 (nhx-9) from Caenorhabditis elegans.